A 273-amino-acid polypeptide reads, in one-letter code: Large ribosomal subunit protein uL2 (273 aa).

2 disordered regions span residues 28-53 and 221-273; these read KPFA…TTRH and RGTA…RRSK. Residues 39 to 48 show a composition bias toward low complexity; that stretch reads KSGGRNNNGR. Residue Lys242 is modified to N6-acetyllysine.

Belongs to the universal ribosomal protein uL2 family. As to quaternary structure, part of the 50S ribosomal subunit. Forms a bridge to the 30S subunit in the 70S ribosome.

Its function is as follows. One of the primary rRNA binding proteins. Required for association of the 30S and 50S subunits to form the 70S ribosome, for tRNA binding and peptide bond formation. It has been suggested to have peptidyltransferase activity; this is somewhat controversial. Makes several contacts with the 16S rRNA in the 70S ribosome. In Escherichia coli (strain SE11), this protein is Large ribosomal subunit protein uL2.